The sequence spans 148 residues: uncharacterized protein (148 aa).

Polar residues predominate over residues 1-11; it reads MKPRNINNSLP. The disordered stretch occupies residues 1–31; the sequence is MKPRNINNSLPLQPLVPDQENKNKKNEEKSV. Basic and acidic residues predominate over residues 19-30; that stretch reads QENKNKKNEEKS.

This is an uncharacterized protein from Escherichia coli (strain K12).